The following is a 99-amino-acid chain: MSSNEKIFSVLRAPRVSEKTARLQEISNQYVFEVSNEATKADVKAAVEQLFDVKVKAVNVVNVKGKSKSFRNRAGSRGNWRKAYVRLVDGQSIDVTAKA.

It belongs to the universal ribosomal protein uL23 family. In terms of assembly, part of the 50S ribosomal subunit. Contacts protein L29, and trigger factor when it is bound to the ribosome.

In terms of biological role, one of the early assembly proteins it binds 23S rRNA. One of the proteins that surrounds the polypeptide exit tunnel on the outside of the ribosome. Forms the main docking site for trigger factor binding to the ribosome. The polypeptide is Large ribosomal subunit protein uL23 (Xanthomonas campestris pv. campestris (strain B100)).